A 252-amino-acid chain; its full sequence is Nicotinamide/nicotinic acid mononucleotide adenylyltransferase 3 (252 aa).

Ser-14 and Phe-15 together coordinate NAD(+). ATP is bound by residues His-22 and Lys-56. NAD(+) contacts are provided by Trp-90, Thr-93, Gly-135, and Asp-137. Lys-140 provides a ligand contact to ATP. The NAD(+) site is built by Leu-147, Trp-148, Arg-167, and Asn-198. Residue 203 to 206 participates in ATP binding; that stretch reads TYIR.

Belongs to the eukaryotic NMN adenylyltransferase family. In terms of assembly, homotetramer. The cofactor is Mg(2+). Expressed in lung and spleen with lower levels in placenta and kidney.

It is found in the mitochondrion. The catalysed reaction is beta-nicotinamide D-ribonucleotide + ATP + H(+) = diphosphate + NAD(+). It carries out the reaction nicotinate beta-D-ribonucleotide + ATP + H(+) = deamido-NAD(+) + diphosphate. Its pathway is cofactor biosynthesis; NAD(+) biosynthesis; NAD(+) from nicotinamide D-ribonucleotide: step 1/1. It functions in the pathway cofactor biosynthesis; NAD(+) biosynthesis; deamido-NAD(+) from nicotinate D-ribonucleotide: step 1/1. Its activity is regulated as follows. Activity is strongly inhibited by galotannin. Inhibited by P1-(adenosine-5')-P4-(nicotinic-acid-riboside-5')-tetraphosphate (Nap4AD). Catalyzes the formation of NAD(+) from nicotinamide mononucleotide (NMN) and ATP. Can also use the deamidated form; nicotinic acid mononucleotide (NaMN) as substrate with the same efficiency. Can use triazofurin monophosphate (TrMP) as substrate. Can also use GTP and ITP as nucleotide donors. Also catalyzes the reverse reaction, i.e. the pyrophosphorolytic cleavage of NAD(+). For the pyrophosphorolytic activity, can use NAD(+), NADH, NaAD, nicotinic acid adenine dinucleotide phosphate (NHD), nicotinamide guanine dinucleotide (NGD) as substrates. Fails to cleave phosphorylated dinucleotides NADP(+), NADPH and NaADP(+). Protects against axonal degeneration following injury. May be involved in the maintenance of axonal integrity. Also functions as a stress-response chaperone protein that prevents toxic aggregation of proteins; this function may be independent of its NAD(+) synthesis activity. The polypeptide is Nicotinamide/nicotinic acid mononucleotide adenylyltransferase 3 (Homo sapiens (Human)).